The primary structure comprises 222 residues: Exosome complex component Rrp4 (222 aa).

The 69-residue stretch at 63-131 (GDLVIGRVTG…EINRVKLTLR (69 aa)) folds into the S1 motif domain.

It belongs to the RRP4 family. In terms of assembly, component of the archaeal exosome complex. Forms a trimer of Rrp4 and/or Csl4 subunits. The trimer associates with a hexameric ring-like arrangement composed of 3 Rrp41-Rrp42 heterodimers.

The protein localises to the cytoplasm. Its function is as follows. Non-catalytic component of the exosome, which is a complex involved in RNA degradation. Increases the RNA binding and the efficiency of RNA degradation. Confers strong poly(A) specificity to the exosome. This is Exosome complex component Rrp4 from Methanosphaera stadtmanae (strain ATCC 43021 / DSM 3091 / JCM 11832 / MCB-3).